We begin with the raw amino-acid sequence, 157 residues long: Probable succinate transporter subunit YjjB (157 aa).

Helical transmembrane passes span 8–28, 50–70, 87–107, and 129–149; these read LALA…AMVF, MILM…SMLV, VFTV…TAMI, and FLTA…PGLW.

This sequence belongs to the ThrE exporter (TC 2.A.79) family. The transporter is composed of YjjB and YjjP.

It localises to the cell inner membrane. Involved in succinate export with YjjP. Both proteins are required for export. The chain is Probable succinate transporter subunit YjjB from Shigella flexneri serotype 5b (strain 8401).